Reading from the N-terminus, the 139-residue chain is Ribonuclease homolog (139 aa).

An N-terminal signal peptide occupies residues 1 to 23 (MAMSSLWWTAILLLALTVSMCYG). Residue His34 is the Proton acceptor of the active site. Intrachain disulfides connect Cys49-Cys102, Cys64-Cys111, and Cys82-Cys126. Position 65-69 (65-69 (KSFNT)) interacts with substrate. Residue His133 is the Proton donor of the active site.

The protein belongs to the pancreatic ribonuclease family.

The protein resides in the secreted. The polypeptide is Ribonuclease homolog (Gallus gallus (Chicken)).